We begin with the raw amino-acid sequence, 730 residues long: Replication restart protein PriA (730 aa).

The region spanning 212–378 (LLFHSGFNVW…QNGKYQHLVL (167 aa)) is the Helicase ATP-binding domain. Position 225-232 (225-232 (GVTGSGKT)) interacts with ATP. The DEAH box motif lies at 321-324 (DEEH). Positions 437, 440, 446, 449, 464, 467, 477, and 480 each coordinate Zn(2+). Positions 472 to 640 (TIPRQCGDCG…LPPFTFQALI (169 aa)) constitute a Helicase C-terminal domain.

This sequence belongs to the helicase family. PriA subfamily. In terms of assembly, component of the replication restart primosome. The cofactor is Zn(2+).

It carries out the reaction Couples ATP hydrolysis with the unwinding of duplex DNA by translocating in the 3'-5' direction.. The enzyme catalyses ATP + H2O = ADP + phosphate + H(+). Initiates the restart of stalled replication forks, which reloads the replicative helicase on sites other than the origin of replication. Recognizes and binds to abandoned replication forks and remodels them to uncover a helicase loading site. Promotes assembly of the primosome at these replication forks. This Haemophilus influenzae (strain ATCC 51907 / DSM 11121 / KW20 / Rd) protein is Replication restart protein PriA.